The sequence spans 434 residues: Glutamyl-tRNA reductase (434 aa).

Substrate is bound by residues 52–55 (TCNR), S115, 120–122 (ETQ), and Q126. The Nucleophile role is filled by C53. 195 to 200 (GAGEMI) contacts NADP(+).

Belongs to the glutamyl-tRNA reductase family. As to quaternary structure, homodimer.

The catalysed reaction is (S)-4-amino-5-oxopentanoate + tRNA(Glu) + NADP(+) = L-glutamyl-tRNA(Glu) + NADPH + H(+). It functions in the pathway porphyrin-containing compound metabolism; protoporphyrin-IX biosynthesis; 5-aminolevulinate from L-glutamyl-tRNA(Glu): step 1/2. Functionally, catalyzes the NADPH-dependent reduction of glutamyl-tRNA(Glu) to glutamate 1-semialdehyde (GSA). This chain is Glutamyl-tRNA reductase, found in Cupriavidus necator (strain ATCC 17699 / DSM 428 / KCTC 22496 / NCIMB 10442 / H16 / Stanier 337) (Ralstonia eutropha).